Consider the following 200-residue polypeptide: Putative protein ATXN8OS (200 aa).

Residues 19–39 (PFSGLKEEEEEDGEDDEEEEE) are disordered. The segment covering 25–39 (EEEEEDGEDDEEEEE) has biased composition (acidic residues).

As to expression, expressed in brain. Expressed in muscle tissues (at protein level).

The protein localises to the cytoplasm. The sequence is that of Putative protein ATXN8OS from Homo sapiens (Human).